Reading from the N-terminus, the 201-residue chain is MLGVQKKCSTRKTAARKTVVRKPAAKKTAAKKAPVRKVAAKKTVARKTVAKKTVAARKPVAKKATAKKAPVRKVAAKKTVARKTVAKKTVAARKPVAKKATAKKAPVRKAVAKKTVARKTVAKKTVAARKPVAKRVASTKKSSIAVKAGVCMKKHKHTAACGRVAASGVKVCASAAKRKTNPNRSRTAHSWRQQLMKLVAR.

Positions M1–A69 are disordered. Composition is skewed to basic residues over residues C8–A50 and P59–A69.

The protein belongs to the histone H1/H5 family. HCT subfamily.

Might have a role in establishing the nucleoid structure of elementary bodies. The sequence is that of Histone-like protein HC2 (hctB) from Chlamydia trachomatis serovar D (strain ATCC VR-885 / DSM 19411 / UW-3/Cx).